The following is a 387-amino-acid chain: Galactokinase (387 aa).

Residue Glu-33–Asp-36 participates in substrate binding. ATP-binding positions include Ser-67 and Gly-124–Ser-130. Mg(2+)-binding residues include Ser-130 and Glu-162. The active-site Proton acceptor is the Asp-174. Tyr-224 is a binding site for substrate.

Belongs to the GHMP kinase family. GalK subfamily.

It localises to the cytoplasm. It carries out the reaction alpha-D-galactose + ATP = alpha-D-galactose 1-phosphate + ADP + H(+). It participates in carbohydrate metabolism; galactose metabolism. In terms of biological role, catalyzes the transfer of the gamma-phosphate of ATP to D-galactose to form alpha-D-galactose-1-phosphate (Gal-1-P). The sequence is that of Galactokinase from Clostridium perfringens (strain SM101 / Type A).